Consider the following 724-residue polypeptide: Solute carrier organic anion transporter family member 4C1 (724 aa).

The Cytoplasmic portion of the chain corresponds to 1–105 (MKSAKGIENL…QCLQRCNTPG (105 aa)). Phosphoserine occurs at positions 15, 16, 24, 26, and 28. The tract at residues 24–71 (SASPSQVEVSALSSDPQRENSQPQELQKPQEPQKSPEPSLPSAPPNVS) is disordered. A compositionally biased stretch (polar residues) spans 25 to 38 (ASPSQVEVSALSSD). The segment covering 44-60 (SQPQELQKPQEPQKSPE) has biased composition (low complexity). The chain crosses the membrane as a helical span at residues 106–126 (GFLLHYCLLAVTQGIVVNGLV). Over 127–145 (NISISTIEKRYEMKSSLTG) the chain is Extracellular. The chain crosses the membrane as a helical span at residues 146–166 (LISSSYDISFCLLSLFVSFFG). The Cytoplasmic segment spans residues 167–172 (ERGHKP). Residues 173–197 (RWLAFAAFMIGLGALVFSLPQFFSG) form a helical membrane-spanning segment. Residues 198–224 (EYKLGSLFEDTCVTTRNSTSCTSSTSS) lie on the Extracellular side of the membrane. A helical membrane pass occupies residues 225–254 (LSNYLYVFILGQLLLGAGGTPLYTLGTAFL). The Cytoplasmic portion of the chain corresponds to 255–274 (DDSVPTHKSSLYIGTGYAMS). Residues 275–295 (ILGPAIGYVLGGQLLTIYVDV) form a helical membrane-spanning segment. At 296–311 (AMGESTDITEDDPRWL) the chain is on the extracellular side. A helical transmembrane segment spans residues 312–336 (GAWWIGFLLSWIFAWSLIIPFSCFP). The Cytoplasmic portion of the chain corresponds to 337-377 (KHLPGTAEIQAGKTSQAHQSNSNADAKFGKSIKDFPAALKN). The chain crosses the membrane as a helical span at residues 378 to 399 (LMKNAVFMCLVLSTSSEALITT). Residues 400–419 (GFATFLPKFIENQFGLTSSF) are Extracellular-facing. A helical membrane pass occupies residues 420–443 (AATLGGAVLIPGAALGQILGGFLV). The Cytoplasmic portion of the chain corresponds to 444-447 (SKFK). The helical transmembrane segment at 448 to 471 (MTCKNTMKFALFTSGVALTLSFVF) threads the bilayer. Topologically, residues 472-580 (IYAKCGNEPF…ETHCAKLPIF (109 aa)) are extracellular. In terms of domain architecture, Kazal-like spans 495–549 (GNLIAPCNANCNCLRSYYYPVCGDGVQYFSPCFAGCSNSVAHRKPKVYYNCSCIE). 3 disulfides stabilise this stretch: C501-C530, C507-C526, and C516-C547. A helical membrane pass occupies residues 581–603 (LCIFFIVIIFTFMAGTPITVSIL). At 604–612 (RCVNHRQRS) the chain is on the cytoplasmic side. A helical transmembrane segment spans residues 613–638 (LALGIQFMVLRLLGTIPGPIIFGFTI). Over 639 to 672 (DSTCILWDINDCGIKGACRIYDNIKMAHMLVAIS) the chain is Extracellular. Residues 673 to 690 (VTCKVITMFFNGFAIFLY) form a helical membrane-spanning segment. Over 691-724 (KPPPSATDLSFHKENAVVTNVLAEQDLNKIVKEG) the chain is Cytoplasmic.

This sequence belongs to the organo anion transporter (TC 2.A.60) family.

The protein localises to the basolateral cell membrane. It catalyses the reaction estrone 3-sulfate(out) = estrone 3-sulfate(in). It carries out the reaction L-thyroxine(out) = L-thyroxine(in). The catalysed reaction is 3,3',5-triiodo-L-thyronine(out) = 3,3',5-triiodo-L-thyronine(in). The enzyme catalyses chenodeoxycholate(out) = chenodeoxycholate(in). It catalyses the reaction glycocholate(out) = glycocholate(in). It carries out the reaction L-homoarginine(in) = L-homoarginine(out). The catalysed reaction is L-arginine(in) = L-arginine(out). The enzyme catalyses N(omega),N(omega)-dimethyl-L-arginine(out) = N(omega),N(omega)-dimethyl-L-arginine(in). Functionally, mediates the transport of organic anions such as steroids (estrone 3-sulfate, chenodeoxycholate, glycocholate) and thyroid hormones (3,3',5-triiodo-L-thyronine (T3), L-thyroxine (T4)), in the kidney. Capable of transporting cAMP and pharmacological substances such as digoxin, ouabain and methotrexate. Transport is independent of sodium, chloride ion, and ATP. Transport activity is stimulated by an acidic extracellular environment due to increased substrate affinity to the transporter. The driving force for this transport activity is currently not known. The role of hydrogencarbonate (HCO3(-), bicarbonate) as the probable counteranion that exchanges for organic anions is still not well defined. Functions as an uptake transporter at the apical membrane, suggesting a role in renal reabsorption. Involved in the renal secretion of the uremic toxin ADMA (N(omega),N(omega)-dimethyl-L-arginine or asymmetrical dimethylarginine), which is associated to cardiovascular events and mortality, and the structurally related amino acids L-arginine and L-homoarginine (a cardioprotective biomarker). Can act bidirectionally, suggesting a dual protective role of this transport protein; exporting L-homoarginine after being synthesized in proximal tubule cells, and mediating uptake of ADMA from the blood into proximal tubule cells where it is degraded by the enzyme dimethylarginine dimethylaminohydrolase 1 (DDAH1). May be involved in sperm maturation by enabling directed movement of organic anions and compounds within or between cells. This ion-transporting process is important to maintain the strict epididymal homeostasis necessary for sperm maturation. May have a role in secretory functions since seminal vesicle epithelial cells are assumed to secrete proteins involved in decapacitation by modifying surface proteins to facilitate the acquisition of the ability to fertilize the egg. The protein is Solute carrier organic anion transporter family member 4C1 of Pongo abelii (Sumatran orangutan).